Here is a 335-residue protein sequence, read N- to C-terminus: 34 kDa spicule matrix protein (335 aa).

Residues 1 to 17 (MKGLLLILASLVAIATG) form the signal peptide. Positions 29–194 (SGASCYRYFN…ATAMRAFVCE (166 aa)) constitute a C-type lectin domain. Cysteine 50 and cysteine 193 are oxidised to a cystine. Residues 199 to 335 (QNIPPGQQPG…QEAETDVTGS (137 aa)) form a disordered region. Gly residues predominate over residues 207-310 (PGFGGQQPGF…GGPQRPGMGG (104 aa)). Residues 311–323 (QPNSPNPRFNRPR) show a composition bias toward low complexity.

This sequence belongs to the SM50 family. As to expression, embryo spicule.

It is found in the secreted. Functionally, major matrix protein of the sea urchin embryo spicule which directs crystal growth in certain orientations and inhibit growth in others. In Lytechinus pictus (Painted sea urchin), this protein is 34 kDa spicule matrix protein.